Here is a 1204-residue protein sequence, read N- to C-terminus: MTKFTKEQNQAINDYGKDILVSASAGSGKTTVLVERVLKRILSGTPVSSLLIITFTKAAAREMKERIKQKISDQIEKEPNNQFLRSQLLDVDTANISTIDSFCLDVIRRFYYVIDLDPQFSVLTDETQAELLKERALHEIEIEYLEKNDQDFQDFYDNFSGDRDAEGARNLLLQLYNTVVTEPNYEKFLNNLPNFYQVQDDLIESDLWQTQIKPLLIKEIKDLQTEIRQFFENPQMENPDLVKVKENYDIFTSRLEQFLNALEDDHSYNEIRASLMNCKFEKNIRKSKKWSEESLETYQESQKLKSDLNDQLKKIFANFFVVEEKEQVNILKKSEKLVKTIVDAEKKLIKRFGQLKREQNLIDYSDMEQFAFSILTTDTSNAHIAQEYYQEKFNEILIDEYQDVNALQENIIAAIKKKGQNNLFMVGDIKQSIYGFRQARPDLFLSKYHAYGQNDDSEKIVLSDNFRSTQRVTKTVNSLFNPILTANFGGIDYKKEGQLQFGATYYPTDLPTASEYIFTDKKQTQASFEENFGDEMDFSEIQMVIARIKQLKEENFQVWDRKTQLKRPLEYSDIAIITRTRSDNLQVMQEFAKADLPLFVTDAQNYFQTFELVMIMNYLRLIDNPQQDIPLVAVLRSPLFNFKEPELAQIRVKTRSGNFYNALTSFASVNSDLGQKCKNFLQQLESLRSFAATHRISELIWSIYERTHLLEIVTGLPNGQQRRVNLESLYERATSYESAGFKGLYQFISFIERMRKNQKDLAQPLLSDKADKAVKLMTIHASKGLEFPVVFVMGLGHKYQTRDLSGNFTISKDGLGLTIKEKDYRIDSLVKSLADVEKRQQMLEEEARILYVGLTRAQQKLILVASVSEMEAKQKKWESEIDQKTNILPLIRKINAQSPLDFLGPKLEQKHEFDQTIEDMTLALEEQDKIYYLKFAVQSDIEEKDEQKDDTQKLSSKMNDVVKTLYNFEYPFADATKTTAYQSVSEIKKVFNDPMDTELENSRLISSSNRYLQPIDETPVFLEKQKFTGAEIGTAMHLVLQYYDYQGDKTEINLEQEIEELVELGKLNPLMVPHLSKEALNWFVMSEFAAEFWQKPEKLHRESQFSSLVNASELFNDFSDSAAKILVHGTIDGYFETDEGLILFDYKTDFVDKTHEEQAIDKIKKKYTGQLRLYEQALNEISENKKVIGKYLILLDARKVVPVD.

The region spanning 2–469 is the UvrD-like helicase ATP-binding domain; the sequence is TKFTKEQNQA…IVLSDNFRST (468 aa). Residue 23–30 participates in ATP binding; the sequence is ASAGSGKT. The UvrD-like helicase C-terminal domain maps to 496 to 784; that stretch reads EGQLQFGATY…KLMTIHASKG (289 aa).

The protein belongs to the helicase family. AddA subfamily. As to quaternary structure, heterodimer of AddA and AddB/RexB. The cofactor is Mg(2+).

The enzyme catalyses Couples ATP hydrolysis with the unwinding of duplex DNA by translocating in the 3'-5' direction.. It carries out the reaction ATP + H2O = ADP + phosphate + H(+). Its function is as follows. The heterodimer acts as both an ATP-dependent DNA helicase and an ATP-dependent, dual-direction single-stranded exonuclease. Recognizes the chi site generating a DNA molecule suitable for the initiation of homologous recombination. The AddA nuclease domain is required for chi fragment generation; this subunit has the helicase and 3' -&gt; 5' nuclease activities. The polypeptide is ATP-dependent helicase/nuclease subunit A (Lactobacillus johnsonii (strain CNCM I-12250 / La1 / NCC 533)).